The chain runs to 156 residues: D-aminoacyl-tRNA deacylase (156 aa).

Positions 137–138 (GP) match the Gly-cisPro motif, important for rejection of L-amino acids motif.

It belongs to the DTD family. Homodimer.

The protein localises to the cytoplasm. The enzyme catalyses glycyl-tRNA(Ala) + H2O = tRNA(Ala) + glycine + H(+). It carries out the reaction a D-aminoacyl-tRNA + H2O = a tRNA + a D-alpha-amino acid + H(+). In terms of biological role, an aminoacyl-tRNA editing enzyme that deacylates mischarged D-aminoacyl-tRNAs. Also deacylates mischarged glycyl-tRNA(Ala), protecting cells against glycine mischarging by AlaRS. Acts via tRNA-based rather than protein-based catalysis; rejects L-amino acids rather than detecting D-amino acids in the active site. By recycling D-aminoacyl-tRNA to D-amino acids and free tRNA molecules, this enzyme counteracts the toxicity associated with the formation of D-aminoacyl-tRNA entities in vivo and helps enforce protein L-homochirality. The chain is D-aminoacyl-tRNA deacylase from Dictyoglomus turgidum (strain DSM 6724 / Z-1310).